The primary structure comprises 89 residues: uncharacterized protein (89 aa).

To B.licheniformis xpaF1 and to B.subtilis XhlA.

This is an uncharacterized protein from Bacillus licheniformis.